Consider the following 385-residue polypeptide: tRNA pseudouridine synthase D (385 aa).

The active-site Nucleophile is the D86. In terms of domain architecture, TRUD spans 165–305; it reads GFPNYFGNQR…TRFLQKDIAP (141 aa).

It belongs to the pseudouridine synthase TruD family.

It catalyses the reaction uridine(13) in tRNA = pseudouridine(13) in tRNA. Responsible for synthesis of pseudouridine from uracil-13 in transfer RNAs. The chain is tRNA pseudouridine synthase D from Helicobacter hepaticus (strain ATCC 51449 / 3B1).